An 86-amino-acid chain; its full sequence is Small ribosomal subunit protein bS16 (86 aa).

It belongs to the bacterial ribosomal protein bS16 family.

The protein is Small ribosomal subunit protein bS16 of Legionella pneumophila (strain Paris).